The chain runs to 347 residues: Protein RecA (347 aa).

Position 68 to 75 (68 to 75 (GPESSGKT)) interacts with ATP.

The protein belongs to the RecA family.

It localises to the cytoplasm. In terms of biological role, can catalyze the hydrolysis of ATP in the presence of single-stranded DNA, the ATP-dependent uptake of single-stranded DNA by duplex DNA, and the ATP-dependent hybridization of homologous single-stranded DNAs. It interacts with LexA causing its activation and leading to its autocatalytic cleavage. This chain is Protein RecA, found in Mycobacterium sp. (strain JLS).